The following is a 206-amino-acid chain: Platelet glycoprotein Ib beta chain (206 aa).

Positions 1 to 26 are cleaved as a signal peptide; sequence MGSRPRGALSLLLLLLALLSRPASGC. 2 disulfide bridges follow: Cys26–Cys32 and Cys30–Cys39. The 29-residue stretch at 27-55 folds into the LRRNT domain; sequence PAPCSCAGTLVDCGRRGLTWASLPAAFPP. The Extracellular segment spans residues 27–147; it reads PAPCSCAGTL…RAACAPGLLC (121 aa). An LRR repeat occupies 60–83; sequence LVLTGNNLTALPPGLLDALPALRA. A glycan (N-linked (GlcNAc...) asparagine) is linked at Asn66. The 55-residue stretch at 89-143 folds into the LRRCT domain; sequence NPWRCDCRLLPLRAWLAGRPERAPYRDLRCVAPPALRGRLLPYVAEDELRAACAP. Cystine bridges form between Cys93–Cys118 and Cys95–Cys141. The helical transmembrane segment at 148–172 threads the bilayer; that stretch reads WGALVAQLALLVLGLLHALLLALLL. The Cytoplasmic segment spans residues 173–206; it reads GRLRRLRARARARSIQEFSLTAPLVAESARGGAS. Phosphoserine is present on residues Ser186 and Ser191. Phosphothreonine is present on Thr193. At Ser200 the chain carries Phosphoserine.

As to quaternary structure, two GP-Ib beta are disulfide-linked to one GP-Ib alpha. GP-IX is complexed with the GP-Ib heterodimer via a non covalent linkage. Interacts with TRAF4.

It is found in the membrane. Gp-Ib, a surface membrane protein of platelets, participates in the formation of platelet plugs by binding to von Willebrand factor, which is already bound to the subendothelium. In Mus musculus (Mouse), this protein is Platelet glycoprotein Ib beta chain (Gp1bb).